The primary structure comprises 221 residues: Ras-related protein Rab-28 (221 aa).

Position 2 is an N-acetylserine (S2). A Phosphoserine modification is found at S8. G21, G24, K25, T26, S27, G38, K39, Y41, and T44 together coordinate GTP. Residue T26 participates in Mg(2+) binding. The switch I stretch occupies residues 35 to 49 (ETFGKQYKQTIGLDF). Positions 44 and 68 each coordinate Mg(2+). Positions 68 to 85 (DIGGQTIGGKMLDKYIYG) are switch II. G71, N129, K130, D132, A160, and K161 together coordinate GTP. The residue at position 218 (C218) is a Cysteine methyl ester. The S-farnesyl cysteine moiety is linked to residue C218. Positions 219-221 (AVQ) are cleaved as a propeptide — removed in mature form.

Belongs to the small GTPase superfamily. Rab family. As to quaternary structure, interacts (prenylated form) with PDE6D; the interaction promotes RAB28 delivery to the photoreceptor outer segments. Interacts with KCNJ13; the interaction may facilitate cone outer segments phagocytosis. Interacts with RELA; the interaction contributes to RELA transport from cytoplasm to nucleus. Mg(2+) serves as cofactor. Post-translationally, isoprenylated.

Its subcellular location is the cell membrane. The protein resides in the cytoplasm. It localises to the cytoskeleton. The protein localises to the cilium basal body. It is found in the nucleus. The catalysed reaction is GTP + H2O = GDP + phosphate + H(+). With respect to regulation, regulated by guanine nucleotide exchange factors (GEFs) which promote the exchange of bound GDP for free GTP. Regulated by GTPase activating proteins (GAPs) which increase the GTP hydrolysis activity. Inhibited by GDP dissociation inhibitors (GDIs). The small GTPases Rab are key regulators of intracellular membrane trafficking, from the formation of transport vesicles to their fusion with membranes. Rabs cycle between an inactive GDP-bound form and an active GTP-bound form that is able to recruit to membranes different sets of downstream effectors directly responsible for vesicle formation, movement, tethering and fusion. RAB28 is required for shedding and phagocytosis of cone cell outer segments (OS) discs in the retina. Also participates in nuclear factor kappa-B p65/RELA nuclear transport in endothelial cells. This is Ras-related protein Rab-28 (RAB28) from Bos taurus (Bovine).